The chain runs to 188 residues: Ribosome maturation factor RimM (188 aa).

The region spanning 93-175 (QDEFYFTDLI…EIEVQGDLSD (83 aa)) is the PRC barrel domain.

This sequence belongs to the RimM family. Binds ribosomal protein uS19.

It is found in the cytoplasm. In terms of biological role, an accessory protein needed during the final step in the assembly of 30S ribosomal subunit, possibly for assembly of the head region. Essential for efficient processing of 16S rRNA. May be needed both before and after RbfA during the maturation of 16S rRNA. It has affinity for free ribosomal 30S subunits but not for 70S ribosomes. This Gluconacetobacter diazotrophicus (strain ATCC 49037 / DSM 5601 / CCUG 37298 / CIP 103539 / LMG 7603 / PAl5) protein is Ribosome maturation factor RimM.